The chain runs to 850 residues: Endoribonuclease ysh-1 (850 aa).

The Zn(2+) site is built by H83, H85, D87, H88, H173, and D194. Residue H442 is the Proton donor of the active site. Residue H464 participates in Zn(2+) binding. 2 disordered regions span residues 685 to 708 (VKRSATKNPHTHSPLPADKNPHSH) and 732 to 784 (SPIV…EQQL). Over residues 744 to 754 (PTTKAITSPSE) the composition is skewed to polar residues. Residues 755–766 (ETAKSSDVKSDA) show a composition bias toward basic and acidic residues. Acidic residues predominate over residues 767–781 (DADASMDVSEEDEDE).

It belongs to the metallo-beta-lactamase superfamily. RNA-metabolizing metallo-beta-lactamase-like family. CPSF2/YSH1 subfamily.

Its subcellular location is the nucleus. Functionally, component of the cleavage factor I (CF I) involved in pre-mRNA 3'-end processing. This is Endoribonuclease ysh-1 (ysh-1) from Neurospora crassa (strain ATCC 24698 / 74-OR23-1A / CBS 708.71 / DSM 1257 / FGSC 987).